Reading from the N-terminus, the 234-residue chain is Probable transcriptional regulatory protein PSPTO_3162 (234 aa).

This sequence belongs to the TACO1 family.

Its subcellular location is the cytoplasm. This is Probable transcriptional regulatory protein PSPTO_3162 from Pseudomonas syringae pv. tomato (strain ATCC BAA-871 / DC3000).